Reading from the N-terminus, the 742-residue chain is Two pore calcium channel protein 1 (742 aa).

The disordered stretch occupies residues 1 to 37 (MSEAEAPLITEEAAERGLASSGSRRLSDGAGGQGSRK). Residues 1–82 (MSEAEAPLIT…NDTRFGRAMS (82 aa)) are Cytoplasmic-facing. A helical membrane pass occupies residues 83–103 (FYFVYLRLDWLWSLNLFALIL). Topologically, residues 104 to 140 (LNFLEKPLWCRKDALQAYDQRDLYFLGQLPYFSKTES) are extracellular. The helical transmembrane segment at 141–161 (LIYEGLTLVILVMDIFCPLSY) threads the bilayer. Over 162–176 (EGLNIFWRSTTNKLK) the chain is Cytoplasmic. The helical transmembrane segment at 177 to 197 (IVLLFILACDILVFAFSSQPF) threads the bilayer. Residues 198 to 204 (RLAPYIR) are Extracellular-facing. Residues 205–226 (VVFLIMTIRELRMCAITLAGLI) traverse the membrane as a helical; Voltage-sensor segment. A helical transmembrane segment spans residues 227-247 (GTYLNVLALSLLFLLFASWLA). Over 248 to 258 (YVTFEDTPQGK) the chain is Extracellular. The segment at residues 259–273 (TIFSSYGVTLYQMFV) is an intramembrane region (pore-forming). Residues 274 to 296 (LFTTSNNPDVWVHAYKIPRWYSL) are Extracellular-facing. The chain crosses the membrane as a helical span at residues 297–317 (FFIVYVLLGVYFLTNLILAVI). The Cytoplasmic portion of the chain corresponds to 318–446 (YDSFKEQFAK…SFVRSRMFEY (129 aa)). EF-hand domains are found at residues 335 to 370 (IRKNILQKAFDLIDTNNRGYLDREQCISLLNELNKY) and 376 to 411 (TSREDFELIFAELDRSGDFKVTSEEFADLCNTIAIK). A helical transmembrane segment spans residues 447-467 (IIVFVLLINLVAVIIETTLDI). Topologically, residues 468-480 (ENSSSQETWQEVE) are extracellular. A glycan (N-linked (GlcNAc...) asparagine) is linked at N469. The chain crosses the membrane as a helical span at residues 481–501 (FFLGWIYVAEMALKIFSLGFG). The Cytoplasmic segment spans residues 502–510 (AYWMEGQNK). Residues 511–531 (FDFVLTWTIFIGETLTFAFPS) form a helical membrane-spanning segment. Residues 532 to 540 (KLPFLSNGE) are Extracellular-facing. Residues 541-558 (WIRYLLLGRVLRLTRILL) traverse the membrane as a helical; Voltage-sensor segment. Topologically, residues 559 to 582 (QVQRFRAFVATFFTLMSSLMPYLG) are cytoplasmic. A helical transmembrane segment spans residues 583 to 603 (IVFCVLCMYCSIGLQIFGGIV). The Extracellular segment spans residues 604–627 (YAGNPTLEETDLFNNDYLLFNFND). An intramembrane region (pore-forming) is located at residues 628 to 642 (YPSGMVTLFNLLVMG). Residues 643-663 (NWQVWMESYWQLTGTSWSLIY) lie on the Extracellular side of the membrane. Residues 664–684 (FVSFYLISILLLLNLIVAFVL) traverse the membrane as a helical segment. The Cytoplasmic segment spans residues 685–742 (EAFFAEMELEKGEEVDIQNPTSGGIKKRRSMRVRSKGTMVDILLHHMLSNELDGSQNS).

The protein belongs to the calcium channel alpha-1 subunit (TC 1.A.1.11) family. Two pore calcium channel subfamily. As to quaternary structure, homodimer.

It is found in the membrane. Inhibited by Al(3+). Functions as a voltage-gated inward-rectifying Ca(2+) channel (VDCC) across the plasma membrane that mediates sucrose-induced Ca(2+) influx in autotrophically grown leaf cells. Acts as the major ROS-responsive Ca(2+) channel and is the possible target of Al-dependent inhibition. Plays a regulatory role in defense responses. The polypeptide is Two pore calcium channel protein 1 (TPC1) (Triticum aestivum (Wheat)).